We begin with the raw amino-acid sequence, 517 residues long: Cytochrome P450 monooxygenase polD (517 aa).

The chain crosses the membrane as a helical span at residues 5–27 (VVLVGIVVLVLAYLSSTGKVYPH). Cys435 provides a ligand contact to heme.

It belongs to the cytochrome P450 family. Heme serves as cofactor.

It localises to the membrane. Functionally, cytochrome P450 monooxygenase; part of the gene cluster that mediates the biosynthesis of antifungal fernane-type triterpenoid polytolypin. PolD doe not seem to be involved in the biosynthesis of polytolypin. Within the pathway, the triterpene cyclase polA first catalyzes the cyclization of 2,3-oxidosqualene to motiol, polc converts the 4-alpha-methyl group of motiol to a carboxyl group, polB is responsible for appending a hydroxyl group at the 2-alpha position and polE is a dual functional P450, which can catalyze the formation of both the 1-beta-hydroxyl group and 10-beta-carboxyl group. The polypeptide is Cytochrome P450 monooxygenase polD (Polytolypa hystricis (strain UAMH7299)).